Reading from the N-terminus, the 122-residue chain is Large ribosomal subunit protein uL14c (122 aa).

This sequence belongs to the universal ribosomal protein uL14 family. In terms of assembly, part of the 50S ribosomal subunit.

Its subcellular location is the plastid. It localises to the chloroplast. Functionally, binds to 23S rRNA. This Coffea arabica (Arabian coffee) protein is Large ribosomal subunit protein uL14c.